The following is a 309-amino-acid chain: Methionine synthase (309 aa).

Residues His201, Cys203, Glu224, and Cys285 each contribute to the Zn(2+) site.

This sequence belongs to the archaeal MetE family. The cofactor is Zn(2+).

It participates in amino-acid biosynthesis; L-methionine biosynthesis via de novo pathway. Its activity is regulated as follows. Is activated by phosphates. Functionally, catalyzes the transfer of a methyl group to L-homocysteine resulting in methionine formation. Can use methylcobalamin and methylcobinamide as methyl donors, but methylcobalamin is not considered to be the physiological substrate. It was proposed that, in vivo, a so-far-unidentified enzyme catalyzes methyltransfer from 5-methyltetrahydromethanopterin (5-CH3-H4MPT) to a corrinoid protein, and that the MetE gene product catalyzes the further transfer to L-homocysteine. Is not active with L-cysteine, coenzyme M, coenzyme B, glutathione or dithiothreitol as substrate. The chain is Methionine synthase from Methanothermobacter marburgensis (strain ATCC BAA-927 / DSM 2133 / JCM 14651 / NBRC 100331 / OCM 82 / Marburg) (Methanobacterium thermoautotrophicum).